We begin with the raw amino-acid sequence, 500 residues long: Cysteine--tRNA ligase (500 aa).

Cys30 contacts Zn(2+). Residues Pro32 to Asn42 carry the 'HIGH' region motif. Zn(2+) contacts are provided by Cys224, His263, and Glu267. A 'KMSKS' region motif is present at residues Lys296–Ser300. Residue Lys299 participates in ATP binding.

This sequence belongs to the class-I aminoacyl-tRNA synthetase family. Monomer. The cofactor is Zn(2+).

It localises to the cytoplasm. The enzyme catalyses tRNA(Cys) + L-cysteine + ATP = L-cysteinyl-tRNA(Cys) + AMP + diphosphate. The sequence is that of Cysteine--tRNA ligase from Bartonella bacilliformis (strain ATCC 35685 / KC583 / Herrer 020/F12,63).